Consider the following 556-residue polypeptide: MDKRHNPSRRIIAPHGSKLSCKSWTTEAPMRMLMNNLHPDVAERPEDLVVYGGIGRAARDWECYDKIIEVLQRLEEDETLLVQSGKPVGVFKTHNNAPRVIIANSNLVPHWANWEHFNELDKKGLAMYGQMTAGSWIYIGSQGIVQGTYETFVAMAKQHFGGSSAGKWILTGGLGGMGGAQPLAGTMAGYSVLTCEVDETRIDFRLRTRYVDKKATSLDEALAMIDEANKSGKPVSVGLLANAADVFAELVERGITPDVVTDQTSAHDPLNGYLPQGWSLEQAADMRKKDEAAVVKAAKQSMAVQVKAMLALQAAGAATTDYGNNIRQMAFEEGVENAFDFPGFVPAYVRPLFCEGIGPFRWAALSGDPEDIYKTDAKVKELIPDNPHLHNWLDMARERIAFQGLPSRICWVGLKDRARLALAFNEMVKNGELSAPVVIGRDHLDSGSVASPNRETESMLDGSDAVSDWPLMNALLNTASGATWVSLHHGGGVGMGFSQHSGVVIVADGTDDAAARLGRVLWNDPATGVMRHADAGYDIAKNCAKEQGLDLPMLEK.

Residues 52 to 53 (GG), glutamine 130, 176 to 178 (GMG), glutamate 196, arginine 201, 242 to 243 (NA), 263 to 267 (QTSAH), 273 to 274 (YL), and tyrosine 322 each bind NAD(+). Cysteine 410 is an active-site residue. Position 492 (glycine 492) interacts with NAD(+).

The protein belongs to the urocanase family. NAD(+) serves as cofactor.

It localises to the cytoplasm. The catalysed reaction is 4-imidazolone-5-propanoate = trans-urocanate + H2O. Its pathway is amino-acid degradation; L-histidine degradation into L-glutamate; N-formimidoyl-L-glutamate from L-histidine: step 2/3. Catalyzes the conversion of urocanate to 4-imidazolone-5-propionate. This is Urocanate hydratase from Shewanella woodyi (strain ATCC 51908 / MS32).